The sequence spans 320 residues: ATP-dependent 6-phosphofructokinase (320 aa).

ATP is bound at residue G12. ADP-binding positions include 22 to 26 (RGVVR) and 55 to 60 (RYSVSD). Residues 73 to 74 (RF) and 103 to 106 (GDGS) contribute to the ATP site. Mg(2+) is bound at residue D104. 126 to 128 (TID) serves as a coordination point for substrate. D128 serves as the catalytic Proton acceptor. R155 provides a ligand contact to ADP. Residues R163 and 170 to 172 (MGR) contribute to the substrate site. ADP contacts are provided by residues 186–188 (GCE), K212, and 214–216 (KKH). Substrate is bound by residues E223, R244, and 250–253 (HIQR).

Belongs to the phosphofructokinase type A (PFKA) family. ATP-dependent PFK group I subfamily. Prokaryotic clade 'B1' sub-subfamily. Homotetramer. Requires Mg(2+) as cofactor.

Its subcellular location is the cytoplasm. It catalyses the reaction beta-D-fructose 6-phosphate + ATP = beta-D-fructose 1,6-bisphosphate + ADP + H(+). It participates in carbohydrate degradation; glycolysis; D-glyceraldehyde 3-phosphate and glycerone phosphate from D-glucose: step 3/4. With respect to regulation, allosterically activated by ADP and other diphosphonucleosides, and allosterically inhibited by phosphoenolpyruvate. Functionally, catalyzes the phosphorylation of D-fructose 6-phosphate to fructose 1,6-bisphosphate by ATP, the first committing step of glycolysis. This is ATP-dependent 6-phosphofructokinase from Escherichia fergusonii (strain ATCC 35469 / DSM 13698 / CCUG 18766 / IAM 14443 / JCM 21226 / LMG 7866 / NBRC 102419 / NCTC 12128 / CDC 0568-73).